The primary structure comprises 448 residues: MKIYNTYSRQLEDFQPIEPGKVKMYVCGPTVYNYIHVGNARSVVAFDLVRKYLEFRGFEVEYISNFTDVDDKIIKAAVSENISTKELSERYIAAFYEDTDLLNVKRASQNPKATEFIEAMIDFIQELLDKDYAYISEGDVYFRVAKSKNYAKLANKNLADLLAGASGRTDEETNLKESPADFALWKSVKADEVSWQAPWGAGRPGWHIECSVMSTSLLGETIDIHGGGADLEFPHHTNEIAQSEAKTGQKFVNYWMHNGFVNVDGEKMSKSLGNFTTVHELLQVVDPQILRFFLATTHYRRPLNFTDDALTEAENNIKKIENAYRHLDDQAESNLSALTTFRNDFVAAMDEDFNIANGMTVFYDFVSWVNKGNGGAEVKAFFDQVLEILGIKFEIEQSLDSEIEAMIEARQLAREVRDFAKSDEIRDALKAQGIVLEDTKDGVRWHRE.

Residue cysteine 27 coordinates Zn(2+). The 'HIGH' region signature appears at 29–39 (PTVYNYIHVGN). Zn(2+) is bound by residues cysteine 210, histidine 235, and glutamate 239. Positions 267–271 (KMSKS) match the 'KMSKS' region motif. Lysine 270 provides a ligand contact to ATP.

It belongs to the class-I aminoacyl-tRNA synthetase family. In terms of assembly, monomer. The cofactor is Zn(2+).

The protein localises to the cytoplasm. It catalyses the reaction tRNA(Cys) + L-cysteine + ATP = L-cysteinyl-tRNA(Cys) + AMP + diphosphate. The protein is Cysteine--tRNA ligase of Lactococcus lactis subsp. cremoris (strain SK11).